Here is a 719-residue protein sequence, read N- to C-terminus: Developmental regulator flbA (719 aa).

Polar residues predominate over residues methionine 1–serine 17. 3 disordered regions span residues methionine 1–alanine 39, isoleucine 117–alanine 141, and leucine 155–arginine 190. 2 stretches are compositionally biased toward low complexity: residues serine 123–glutamine 135 and proline 158–serine 171. A fungal-DR region spans residues glutamine 214–valine 411. The 87-residue stretch at glycine 425 to glutamate 511 folds into the DEP domain. Positions serine 540–isoleucine 685 constitute an RGS domain. Residues leucine 694–serine 719 are disordered.

Functionally, required for asexual sporulation and normal colony development. May be involved in brlA activation. Could play a regulatory role in controlling the flug-initiated signal transduction pathway that triggers the asexual reproduction. This Emericella nidulans (strain FGSC A4 / ATCC 38163 / CBS 112.46 / NRRL 194 / M139) (Aspergillus nidulans) protein is Developmental regulator flbA (flbA).